A 365-amino-acid chain; its full sequence is D-alanine--D-alanine ligase (365 aa).

In terms of domain architecture, ATP-grasp spans 135–345 (KLLLKSFNIP…YGSLVDKLIA (211 aa)). Residue 168-223 (KQSLDYPVIVKPAMLGSSIGISIAYNETQIEKCIEEAFAYDLTVVIEKFMRAREIE) coordinates ATP. 3 residues coordinate Mg(2+): aspartate 298, glutamate 312, and asparagine 314.

It belongs to the D-alanine--D-alanine ligase family. The cofactor is Mg(2+). Mn(2+) serves as cofactor.

The protein localises to the cytoplasm. The catalysed reaction is 2 D-alanine + ATP = D-alanyl-D-alanine + ADP + phosphate + H(+). It participates in cell wall biogenesis; peptidoglycan biosynthesis. Its function is as follows. Cell wall formation. This chain is D-alanine--D-alanine ligase, found in Borrelia turicatae (strain 91E135).